A 334-amino-acid polypeptide reads, in one-letter code: L-lactate dehydrogenase B-A chain (334 aa).

NAD(+)-binding positions include 30–58 and Arg100; that span reads GQVGMACAVSVLLRELADELALVDVVEDR. 3 residues coordinate substrate: Arg107, Asn139, and Arg170. Asn139 is a binding site for NAD(+). The active-site Proton acceptor is the His194. Thr249 is a binding site for substrate.

The protein belongs to the LDH/MDH superfamily. LDH family. In terms of assembly, homotetramer.

The protein resides in the cytoplasm. It catalyses the reaction (S)-lactate + NAD(+) = pyruvate + NADH + H(+). It functions in the pathway fermentation; pyruvate fermentation to lactate; (S)-lactate from pyruvate: step 1/1. In Danio rerio (Zebrafish), this protein is L-lactate dehydrogenase B-A chain (ldhba).